The primary structure comprises 681 residues: uncharacterized protein (681 aa).

In the N-terminal section; belongs to the purine/pyrimidine phosphoribosyltransferase family.

This is an uncharacterized protein from Mycobacterium tuberculosis (strain CDC 1551 / Oshkosh).